The following is a 166-amino-acid chain: HTH-type transcriptional regulator rot (166 aa).

Residues 87 to 110 (LKEMDRFVEVKPYKRTRTYNNLVE) constitute a DNA-binding region (H-T-H motif).

Belongs to the rot family.

Functionally, global regulator with both positive and negative effects that mediates modulation of several genes involved in virulence. Also, modulates the expression of genes not previously implicated in pathogenesis. This chain is HTH-type transcriptional regulator rot (rot), found in Staphylococcus aureus (strain MRSA252).